The primary structure comprises 424 residues: Kynurenine--oxoglutarate transaminase 1 (424 aa).

Position 36 (glycine 36) interacts with substrate. Position 82 is an N6-succinyllysine (lysine 82). Asparagine 185 contacts substrate. Lysine 247 bears the N6-(pyridoxal phosphate)lysine mark. Arginine 398 contributes to the substrate binding site. Residue lysine 413 is modified to N6-succinyllysine.

It belongs to the class-I pyridoxal-phosphate-dependent aminotransferase family. As to quaternary structure, homodimer. Pyridoxal 5'-phosphate is required as a cofactor.

It localises to the cytoplasm. The protein resides in the cytosol. The enzyme catalyses L-kynurenine + 2-oxoglutarate = kynurenate + L-glutamate + H2O. The catalysed reaction is 3-phenylpyruvate + L-glutamine = 2-oxoglutaramate + L-phenylalanine. It catalyses the reaction an S-substituted L-cysteine + H2O = a thiol + pyruvate + NH4(+). The protein operates within amino-acid degradation; L-kynurenine degradation; kynurenate from L-kynurenine: step 1/2. Catalyzes the irreversible transamination of the L-tryptophan metabolite L-kynurenine to form kynurenic acid (KA), an intermediate in the tryptophan catabolic pathway which is also a broad spectrum antagonist of the three ionotropic excitatory amino acid receptors among others. Metabolizes the cysteine conjugates of certain halogenated alkenes and alkanes to form reactive metabolites. Catalyzes the beta-elimination of S-conjugates and Se-conjugates of L-(seleno)cysteine, resulting in the cleavage of the C-S or C-Se bond. In Mus musculus (Mouse), this protein is Kynurenine--oxoglutarate transaminase 1 (Kyat1).